We begin with the raw amino-acid sequence, 210 residues long: NADH dehydrogenase [ubiquinone] iron-sulfur protein 8, mitochondrial (210 aa).

The transit peptide at 1 to 34 (MRCLTMPTLLRALAQAAHTGPPGGRTLHSSAVAA) directs the protein to the mitochondrion. 4Fe-4S ferredoxin-type domains are found at residues 102 to 131 (RRYPSGEERCIACKLCEAVCPAQAITIEAE) and 141 to 170 (TRYDIDMTKCIYCGFCQEACPVDAIVEGPN). Residues Cys111, Cys114, Cys117, Cys121, Cys150, Cys153, Cys156, and Cys160 each coordinate [4Fe-4S] cluster.

This sequence belongs to the complex I 23 kDa subunit family. Core subunit of respiratory chain NADH dehydrogenase (Complex I) which is composed of 45 different subunits. This is a component of the iron-sulfur (IP) fragment of the enzyme. Interacts with RAB5IF. It depends on [4Fe-4S] cluster as a cofactor.

It localises to the mitochondrion inner membrane. The catalysed reaction is a ubiquinone + NADH + 5 H(+)(in) = a ubiquinol + NAD(+) + 4 H(+)(out). In terms of biological role, core subunit of the mitochondrial membrane respiratory chain NADH dehydrogenase (Complex I) which catalyzes electron transfer from NADH through the respiratory chain, using ubiquinone as an electron acceptor. Essential for the catalytic activity and assembly of complex I. The protein is NADH dehydrogenase [ubiquinone] iron-sulfur protein 8, mitochondrial (NDUFS8) of Macaca fascicularis (Crab-eating macaque).